We begin with the raw amino-acid sequence, 175 residues long: Probable S-adenosyl-L-methionine-binding protein VirR (175 aa).

A TsaA-like domain is found at 35 to 165; the sequence is LFFVGKIRTP…DRSLSKPLAP (131 aa). Residues 52–54, 90–91, arginine 114, threonine 124, and 145–148 each bind S-adenosyl-L-methionine; these read PRQ, HE, and LDGT.

It belongs to the tRNA methyltransferase O family.

The chain is Probable S-adenosyl-L-methionine-binding protein VirR (virR) from Rhizobium radiobacter (Agrobacterium tumefaciens).